We begin with the raw amino-acid sequence, 610 residues long: Phosphomethylpyrimidine synthase (610 aa).

Substrate is bound by residues N216, M245, Y274, H310, 330–332, 371–374, and E410; these read SRG and DGLR. Zn(2+) is bound at residue H414. Substrate is bound at residue Y437. H478 contacts Zn(2+). Residues C558, C561, and C566 each contribute to the [4Fe-4S] cluster site.

The protein belongs to the ThiC family. In terms of assembly, homodimer. [4Fe-4S] cluster serves as cofactor.

It carries out the reaction 5-amino-1-(5-phospho-beta-D-ribosyl)imidazole + S-adenosyl-L-methionine = 4-amino-2-methyl-5-(phosphooxymethyl)pyrimidine + CO + 5'-deoxyadenosine + formate + L-methionine + 3 H(+). Its pathway is cofactor biosynthesis; thiamine diphosphate biosynthesis. In terms of biological role, catalyzes the synthesis of the hydroxymethylpyrimidine phosphate (HMP-P) moiety of thiamine from aminoimidazole ribotide (AIR) in a radical S-adenosyl-L-methionine (SAM)-dependent reaction. The polypeptide is Phosphomethylpyrimidine synthase (Allorhizobium ampelinum (strain ATCC BAA-846 / DSM 112012 / S4) (Agrobacterium vitis (strain S4))).